A 129-amino-acid polypeptide reads, in one-letter code: Small ribosomal subunit protein bS6 (129 aa).

Residues 103–129 (LKQKEERAERAPRREERAEAKPEAAAE) form a disordered region. A compositionally biased stretch (basic and acidic residues) spans 104 to 129 (KQKEERAERAPRREERAEAKPEAAAE).

The protein belongs to the bacterial ribosomal protein bS6 family.

Binds together with bS18 to 16S ribosomal RNA. The polypeptide is Small ribosomal subunit protein bS6 (Vibrio campbellii (strain ATCC BAA-1116)).